The sequence spans 460 residues: ATP synthase subunit beta (460 aa).

Residue 150–157 (GGAGVGKT) participates in ATP binding.

This sequence belongs to the ATPase alpha/beta chains family. As to quaternary structure, F-type ATPases have 2 components, CF(1) - the catalytic core - and CF(0) - the membrane proton channel. CF(1) has five subunits: alpha(3), beta(3), gamma(1), delta(1), epsilon(1). CF(0) has three main subunits: a(1), b(2) and c(9-12). The alpha and beta chains form an alternating ring which encloses part of the gamma chain. CF(1) is attached to CF(0) by a central stalk formed by the gamma and epsilon chains, while a peripheral stalk is formed by the delta and b chains.

Its subcellular location is the cell inner membrane. The catalysed reaction is ATP + H2O + 4 H(+)(in) = ADP + phosphate + 5 H(+)(out). Its function is as follows. Produces ATP from ADP in the presence of a proton gradient across the membrane. The catalytic sites are hosted primarily by the beta subunits. In Photorhabdus laumondii subsp. laumondii (strain DSM 15139 / CIP 105565 / TT01) (Photorhabdus luminescens subsp. laumondii), this protein is ATP synthase subunit beta.